A 203-amino-acid chain; its full sequence is FMN-dependent NADH:quinone oxidoreductase 5 (203 aa).

FMN contacts are provided by residues serine 9, 15–17 (SAS), 95–98 (MYNF), and 139–142 (TSGG).

The protein belongs to the azoreductase type 1 family. As to quaternary structure, homodimer. FMN is required as a cofactor.

It carries out the reaction 2 a quinone + NADH + H(+) = 2 a 1,4-benzosemiquinone + NAD(+). The enzyme catalyses N,N-dimethyl-1,4-phenylenediamine + anthranilate + 2 NAD(+) = 2-(4-dimethylaminophenyl)diazenylbenzoate + 2 NADH + 2 H(+). Functionally, quinone reductase that provides resistance to thiol-specific stress caused by electrophilic quinones. In terms of biological role, also exhibits azoreductase activity. Catalyzes the reductive cleavage of the azo bond in aromatic azo compounds to the corresponding amines. The chain is FMN-dependent NADH:quinone oxidoreductase 5 from Pseudomonas fluorescens (strain ATCC BAA-477 / NRRL B-23932 / Pf-5).